A 29-amino-acid polypeptide reads, in one-letter code: Glucagon (29 aa).

Belongs to the glucagon family.

The protein localises to the secreted. Functionally, glucagon plays a key role in glucose metabolism and homeostasis. Regulates blood glucose by increasing gluconeogenesis and decreasing glycolysis. This Callorhinchus milii (Ghost shark) protein is Glucagon (gcg).